We begin with the raw amino-acid sequence, 20 residues long: Elastase (20 aa).

One can recognise a Peptidase S1 domain in the interval 1–20 (VVGGEVARAHSWPWQISLQY).

The protein belongs to the peptidase S1 family. Elastase subfamily.

Digests most rapidly at the C-terminal side of alanine residues, but also cleaves at valine and leucine residues. This is Elastase from Gadus morhua (Atlantic cod).